Here is a 657-residue protein sequence, read N- to C-terminus: tRNA uridine 5-carboxymethylaminomethyl modification enzyme MnmG (657 aa).

Residue 13–18 participates in FAD binding; the sequence is GGGHAG. 281–295 serves as a coordination point for NAD(+); sequence GPRYCPSVEDKINRF.

This sequence belongs to the MnmG family. In terms of assembly, homodimer. Heterotetramer of two MnmE and two MnmG subunits. The cofactor is FAD.

It is found in the cytoplasm. NAD-binding protein involved in the addition of a carboxymethylaminomethyl (cmnm) group at the wobble position (U34) of certain tRNAs, forming tRNA-cmnm(5)s(2)U34. The polypeptide is tRNA uridine 5-carboxymethylaminomethyl modification enzyme MnmG (Acidovorax ebreus (strain TPSY) (Diaphorobacter sp. (strain TPSY))).